The sequence spans 356 residues: Mitogen-activated protein kinase PMK1 (356 aa).

Residues 24–312 (YDIQDVVGEG…VEEALKHPYL (289 aa)) form the Protein kinase domain. ATP is bound by residues 30-38 (VGEGAYGVV) and Lys53.

It belongs to the protein kinase superfamily. CMGC Ser/Thr protein kinase family. MAP kinase subfamily. Mg(2+) serves as cofactor. Post-translationally, phosphorylated by MST7.

The enzyme catalyses L-seryl-[protein] + ATP = O-phospho-L-seryl-[protein] + ADP + H(+). It catalyses the reaction L-threonyl-[protein] + ATP = O-phospho-L-threonyl-[protein] + ADP + H(+). Mitogen-activated protein kinase; part of the MST11-MST7-PMK1 MAP kinase (MAPK) cascade that is essential for appressorium formation, penetration and invasive growth. Central regulator of appressorium development that acts downstream of the cAMP signal. The MST11-MST7-PMK1 MAP kinase cascade transduces signals from the cell surface sensors MDB2 and SHO1 that recognize various surface signals such as surface hydrophobicity, cutin monomers, and rice leaf waxes. Regulates expression of secreted fungal effector proteins implicated of host immune defenses, preventing reactive oxygen species generation and excessive callose deposition at plasmodesmata. Furthermore, controls the hyphal constriction required for fungal growth from one rice cell to the neighboring cell, enabling host tissue colonization and blast disease. Targets downstream of the PMK1-MAPK pathway include transcription factor MST12 and pathogenicity-related genes GAS1 and GAS2, both of which are expressed during appressorium formation, even if regulation of MST12 is not associated with expression of GAS1 or GAS2. This chain is Mitogen-activated protein kinase PMK1, found in Pyricularia oryzae (Rice blast fungus).